The primary structure comprises 249 residues: Flavodoxin/ferredoxin--NADP reductase (249 aa).

In terms of domain architecture, FAD-binding FR-type spans 2–102 (NTWITAKIIK…KKSYGFFTLN (101 aa)). FAD contacts are provided by residues 51–54 (RAYS), Tyr67, 75–77 (QLT), and Thr117. NADP(+) is bound by residues 144–145 (VR), 174–175 (SR), Arg185, and 215–217 (NPD). An FAD-binding site is contributed by 248-249 (YW).

Belongs to the ferredoxin--NADP reductase type 1 family. FAD serves as cofactor.

The protein localises to the cytoplasm. It carries out the reaction 2 reduced [2Fe-2S]-[ferredoxin] + NADP(+) + H(+) = 2 oxidized [2Fe-2S]-[ferredoxin] + NADPH. It catalyses the reaction reduced [flavodoxin] + NADP(+) = oxidized [flavodoxin] + NADPH + 2 H(+). Its function is as follows. Transports electrons between flavodoxin or ferredoxin and NADPH. The sequence is that of Flavodoxin/ferredoxin--NADP reductase (fpr) from Buchnera aphidicola subsp. Baizongia pistaciae (strain Bp).